The chain runs to 268 residues: Glucosamine-6-phosphate deaminase (268 aa).

Catalysis depends on Asp72, which acts as the Proton acceptor; for enolization step. Asp141 serves as the catalytic For ring-opening step. The active-site Proton acceptor; for ring-opening step is the His143. Glu148 acts as the For ring-opening step in catalysis.

The protein belongs to the glucosamine/galactosamine-6-phosphate isomerase family. NagB subfamily. In terms of assembly, homohexamer.

The catalysed reaction is alpha-D-glucosamine 6-phosphate + H2O = beta-D-fructose 6-phosphate + NH4(+). Its pathway is amino-sugar metabolism; N-acetylneuraminate degradation; D-fructose 6-phosphate from N-acetylneuraminate: step 5/5. Allosterically activated by N-acetylglucosamine 6-phosphate (GlcNAc6P). In terms of biological role, catalyzes the reversible isomerization-deamination of glucosamine 6-phosphate (GlcN6P) to form fructose 6-phosphate (Fru6P) and ammonium ion. This chain is Glucosamine-6-phosphate deaminase, found in Histophilus somni (strain 2336) (Haemophilus somnus).